The following is a 598-amino-acid chain: Elongation factor 4 (598 aa).

The 178-residue stretch at 4-181 (KKIRNFAIIA…AIVNLIPPPQ (178 aa)) folds into the tr-type G domain. GTP-binding positions include 16–21 (DHGKST) and 128–131 (NKID).

Belongs to the TRAFAC class translation factor GTPase superfamily. Classic translation factor GTPase family. LepA subfamily.

It is found in the cell membrane. The enzyme catalyses GTP + H2O = GDP + phosphate + H(+). Required for accurate and efficient protein synthesis under certain stress conditions. May act as a fidelity factor of the translation reaction, by catalyzing a one-codon backward translocation of tRNAs on improperly translocated ribosomes. Back-translocation proceeds from a post-translocation (POST) complex to a pre-translocation (PRE) complex, thus giving elongation factor G a second chance to translocate the tRNAs correctly. Binds to ribosomes in a GTP-dependent manner. The chain is Elongation factor 4 from Mesomycoplasma hyopneumoniae (strain J / ATCC 25934 / NCTC 10110) (Mycoplasma hyopneumoniae).